The primary structure comprises 285 residues: Pantothenate synthetase (285 aa).

30-37 (MGNLHRGH) provides a ligand contact to ATP. Residue histidine 37 is the Proton donor of the active site. Residue glutamine 61 participates in (R)-pantoate binding. Residue glutamine 61 participates in beta-alanine binding. An ATP-binding site is contributed by 149–152 (GRKD). Position 155 (glutamine 155) interacts with (R)-pantoate. ATP contacts are provided by residues valine 178 and 186-189 (LSSR).

It belongs to the pantothenate synthetase family. In terms of assembly, homodimer.

The protein resides in the cytoplasm. The enzyme catalyses (R)-pantoate + beta-alanine + ATP = (R)-pantothenate + AMP + diphosphate + H(+). The protein operates within cofactor biosynthesis; (R)-pantothenate biosynthesis; (R)-pantothenate from (R)-pantoate and beta-alanine: step 1/1. In terms of biological role, catalyzes the condensation of pantoate with beta-alanine in an ATP-dependent reaction via a pantoyl-adenylate intermediate. This is Pantothenate synthetase from Halorhodospira halophila (strain DSM 244 / SL1) (Ectothiorhodospira halophila (strain DSM 244 / SL1)).